Consider the following 431-residue polypeptide: Histidine--tRNA ligase (431 aa).

This sequence belongs to the class-II aminoacyl-tRNA synthetase family.

Its subcellular location is the cytoplasm. The catalysed reaction is tRNA(His) + L-histidine + ATP = L-histidyl-tRNA(His) + AMP + diphosphate + H(+). The chain is Histidine--tRNA ligase (hisS) from Pyrococcus abyssi (strain GE5 / Orsay).